The sequence spans 472 residues: MLNSRELLLSKYVNTIKKDDNSFRLFHSIHGGLCEVDNEIYKVLNYLKKSRLLTDIYNEFSYIDNSEINDIVNEFFEKGFIIYNGQNEIESYREHEKRRINRIETGEQIKAIQLVVSNKCNYNCKYCFTNSIYSSKEREIYQKHDKNQIMTPENAINYIEKVIEKIIKANNKELSIQFFGGEPLTNWNTIERVLDHYKNEDRLKIDYSIVTNGALITPKISEYLKKYNVPVIMSFDSPNRSHRYTNDGSDSIKNTIKSLEILKENNNYIAFNSVLSRDTFDYFNNDIVDFAQNYNVSEIGILLDLNPSFYKDFNLDDIVNKVIDLYEYGLDNGIIVTGYWHITYQNIIMNKSIDRGYKTCSATGGQLSIEPMGVVFACKGSSGYFGNMNDLEGLLSCENYIKYASRSFINSNNCINCELIGHCSGLCLGAIEKKYGNIMYMDKGACDLYKLLIRRLIEREKNIFRYDIDESK.

Residues 106–331 (GEQIKAIQLV…VIDLYEYGLD (226 aa)) enclose the Radical SAM core domain. [4Fe-4S] cluster contacts are provided by Cys-120, Cys-124, Cys-127, Tyr-339, Cys-360, Cys-378, Cys-414, Cys-417, Cys-423, Cys-427, and Cys-446.

Belongs to the radical SAM superfamily. It depends on [4Fe-4S] cluster as a cofactor.

The catalysed reaction is L-isoleucyl-[protein] + AH2 + 2 S-adenosyl-L-methionine = methylcyclopropylglycine-[protein] + 2 5'-deoxyadenosine + 2 L-methionine + A + 2 H(+). In terms of biological role, radical S-adenosylmethionine (SAM) enzyme that catalyzes the formation of methylcyclopropylglycine (mCPG) residues from isoleucine residues residing in the repeating TIGSVS motif of the precursor peptide TigB. Is thus involved in the maturation of a ribosomally synthesized and post-translationally modified peptide (RiPP). This Paramaledivibacter caminithermalis (strain DSM 15212 / CIP 107654 / DViRD3) (Clostridium caminithermale) protein is Radical SAM cyclopropyl synthase TigE.